We begin with the raw amino-acid sequence, 327 residues long: MAVDQRPLAIAVMGPTASGKTALALEAAERWNGEIVSVDSALVYRGLEIGAAKPDAAMRAAVPHHLLDLRDPWQVYSAAEFAADARQAIAQIVARGRLPILAGGTGLYFRALLEGLSQLPEADQAVRASIAAEAQQIGWAGLHAQLARVDPVAAARIHATDPQRIQRALEVYRISGRPISAWQALPPGPRLPVRVLKVVLAPRERAVLHARIAHRLDAMLAQDFLTEVRRLRALPQLQAVAAPLDLPAVRAVGYRQAWQYLDGAGSLAEFRDKAIQATRQLAKRQLTWLRGELDARWFDPERDRHQLEDAIVGFLADRPAVRQASGV.

14 to 21 is a binding site for ATP; the sequence is GPTASGKT. 16–21 contributes to the substrate binding site; that stretch reads TASGKT. Interaction with substrate tRNA regions lie at residues 39-42 and 163-167; these read DSAL and QRIQR.

This sequence belongs to the IPP transferase family. In terms of assembly, monomer. Mg(2+) is required as a cofactor.

The catalysed reaction is adenosine(37) in tRNA + dimethylallyl diphosphate = N(6)-dimethylallyladenosine(37) in tRNA + diphosphate. Its function is as follows. Catalyzes the transfer of a dimethylallyl group onto the adenine at position 37 in tRNAs that read codons beginning with uridine, leading to the formation of N6-(dimethylallyl)adenosine (i(6)A). This chain is tRNA dimethylallyltransferase, found in Xanthomonas axonopodis pv. citri (strain 306).